Here is a 205-residue protein sequence, read N- to C-terminus: Large ribosomal subunit protein bL25 (205 aa).

The protein belongs to the bacterial ribosomal protein bL25 family. CTC subfamily. As to quaternary structure, part of the 50S ribosomal subunit; part of the 5S rRNA/L5/L18/L25 subcomplex. Contacts the 5S rRNA. Binds to the 5S rRNA independently of L5 and L18.

This is one of the proteins that binds to the 5S RNA in the ribosome where it forms part of the central protuberance. The sequence is that of Large ribosomal subunit protein bL25 from Stutzerimonas stutzeri (strain A1501) (Pseudomonas stutzeri).